A 366-amino-acid polypeptide reads, in one-letter code: Histidinol-phosphate aminotransferase (366 aa).

The residue at position 228 (K228) is an N6-(pyridoxal phosphate)lysine.

It belongs to the class-II pyridoxal-phosphate-dependent aminotransferase family. Histidinol-phosphate aminotransferase subfamily. Homodimer. Pyridoxal 5'-phosphate serves as cofactor.

It carries out the reaction L-histidinol phosphate + 2-oxoglutarate = 3-(imidazol-4-yl)-2-oxopropyl phosphate + L-glutamate. It functions in the pathway amino-acid biosynthesis; L-histidine biosynthesis; L-histidine from 5-phospho-alpha-D-ribose 1-diphosphate: step 7/9. The sequence is that of Histidinol-phosphate aminotransferase from Campylobacter fetus subsp. fetus (strain 82-40).